The following is a 476-amino-acid chain: Aspartyl/glutamyl-tRNA(Asn/Gln) amidotransferase subunit B (476 aa).

Belongs to the GatB/GatE family. GatB subfamily. As to quaternary structure, heterotrimer of A, B and C subunits.

The enzyme catalyses L-glutamyl-tRNA(Gln) + L-glutamine + ATP + H2O = L-glutaminyl-tRNA(Gln) + L-glutamate + ADP + phosphate + H(+). It catalyses the reaction L-aspartyl-tRNA(Asn) + L-glutamine + ATP + H2O = L-asparaginyl-tRNA(Asn) + L-glutamate + ADP + phosphate + 2 H(+). Functionally, allows the formation of correctly charged Asn-tRNA(Asn) or Gln-tRNA(Gln) through the transamidation of misacylated Asp-tRNA(Asn) or Glu-tRNA(Gln) in organisms which lack either or both of asparaginyl-tRNA or glutaminyl-tRNA synthetases. The reaction takes place in the presence of glutamine and ATP through an activated phospho-Asp-tRNA(Asn) or phospho-Glu-tRNA(Gln). In Bacillus cytotoxicus (strain DSM 22905 / CIP 110041 / 391-98 / NVH 391-98), this protein is Aspartyl/glutamyl-tRNA(Asn/Gln) amidotransferase subunit B.